A 439-amino-acid polypeptide reads, in one-letter code: Microfibrillar-associated protein 1 (439 aa).

The segment covering 1–17 has biased composition (polar residues); sequence MSVPSSLMKQPPIQSTA. The interval 1–200 is disordered; that stretch reads MSVPSSLMKQ…SEDEMEPRLK (200 aa). Residue S2 is modified to N-acetylserine. The segment covering 23–34 has biased composition (basic and acidic residues); sequence RNEKGEISMEKV. Phosphoserine occurs at positions 52 and 53. Residues 61 to 70 are compositionally biased toward basic and acidic residues; the sequence is QFIKKAKEQE. Residue K67 forms a Glycyl lysine isopeptide (Lys-Gly) (interchain with G-Cter in SUMO2) linkage. The segment covering 71-81 has biased composition (acidic residues); that stretch reads AEPEEQEEDSS. Phosphoserine occurs at positions 94, 116, 118, 132, and 133. 2 stretches are compositionally biased toward acidic residues: residues 112–122 and 131–144; these read VVGESDSEVEG and DSSEEEEEEIDEEE. A compositionally biased stretch (basic and acidic residues) spans 145–163; it reads IERRRGMMRQRAQERKNEE. Residues 178-195 show a composition bias toward acidic residues; it reads ESESESEYEEYTDSEDEM. K249 participates in a covalent cross-link: Glycyl lysine isopeptide (Lys-Gly) (interchain with G-Cter in SUMO2). Residue T267 is modified to Phosphothreonine. Residue K357 forms a Glycyl lysine isopeptide (Lys-Gly) (interchain with G-Cter in SUMO2) linkage. Position 361 is a phosphoserine (S361). Glycyl lysine isopeptide (Lys-Gly) (interchain with G-Cter in SUMO2) cross-links involve residues K371, K381, K415, and K418. Phosphoserine is present on S432.

It belongs to the MFAP1 family. As to quaternary structure, component of the spliceosome B complex. Interacts with PRPF38A (via N-terminal interaction domain).

The protein resides in the nucleus. Its function is as follows. Involved in pre-mRNA splicing as a component of the spliceosome. The protein is Microfibrillar-associated protein 1 of Bos taurus (Bovine).